Reading from the N-terminus, the 209-residue chain is Uracil phosphoribosyltransferase (209 aa).

Residues arginine 79, arginine 104, and 131–139 (DPMLATGGS) each bind 5-phospho-alpha-D-ribose 1-diphosphate. Uracil-binding positions include isoleucine 194 and 199 to 201 (GDA). Position 200 (aspartate 200) interacts with 5-phospho-alpha-D-ribose 1-diphosphate.

It belongs to the UPRTase family. Mg(2+) serves as cofactor.

It catalyses the reaction UMP + diphosphate = 5-phospho-alpha-D-ribose 1-diphosphate + uracil. Its pathway is pyrimidine metabolism; UMP biosynthesis via salvage pathway; UMP from uracil: step 1/1. With respect to regulation, allosterically activated by GTP. In terms of biological role, catalyzes the conversion of uracil and 5-phospho-alpha-D-ribose 1-diphosphate (PRPP) to UMP and diphosphate. The polypeptide is Uracil phosphoribosyltransferase (Lactobacillus delbrueckii subsp. bulgaricus (strain ATCC 11842 / DSM 20081 / BCRC 10696 / JCM 1002 / NBRC 13953 / NCIMB 11778 / NCTC 12712 / WDCM 00102 / Lb 14)).